A 1939-amino-acid polypeptide reads, in one-letter code: Myosin heavy chain, skeletal muscle, adult (1939 aa).

Alanine 2 bears the N-acetylalanine mark. A Myosin N-terminal SH3-like domain is found at 34–83; the sequence is DAKSSVFVVHPKESFVKGTIQSKEGGKVTVKTEGGETLTVKEDQVFSMNP. N6-methyllysine is present on lysine 36. Positions 87-781 constitute a Myosin motor domain; that stretch reads DKIEDMAMMT…LLGLLEEMRD (695 aa). Position 131 is an N6,N6,N6-trimethyllysine (lysine 131). 180-187 contributes to the ATP binding site; it reads GESGAGKT. An N6,N6,N6-trimethyllysine modification is found at lysine 552. Residues 658-680 are actin-binding; the sequence is LNKLMANLRSTHPHFVRCIIPNE. Histidine 756 carries the pros-methylhistidine modification. The tract at residues 760–774 is actin-binding; that stretch reads RFGHTKVFFKAGLLG. Positions 784-813 constitute an IQ domain; it reads LAEIITRTQARCRGFLMRVEYRRMVERRES. The segment at 839–841 is hinge; it reads IKP. Residues 842-1939 are a coiled coil; it reads LLKSAESEKE…IHGKKIEEEE (1098 aa).

The protein belongs to the TRAFAC class myosin-kinesin ATPase superfamily. Myosin family. Muscle myosin is a hexameric protein that consists of 2 heavy chain subunits (MHC), 2 alkali light chain subunits (MLC) and 2 regulatory light chain subunits (MLC-2).

It is found in the cytoplasm. Its subcellular location is the myofibril. Its function is as follows. Muscle contraction. Myosin is a protein that binds to F-actin and has ATPase activity that is activated by F-actin. The polypeptide is Myosin heavy chain, skeletal muscle, adult (Gallus gallus (Chicken)).